A 260-amino-acid chain; its full sequence is Peptidase inhibitor 15-A (260 aa).

Residues 1–21 form the signal peptide; sequence MNENRLAIDILLLCISCGASA. Residues 22–62 constitute a propeptide that is removed on maturation; that stretch reads LAGFSPTASSSLPATNLTDIGFAPPKYLTEAANIPKTRRKR. Asn-37 and Asn-126 each carry an N-linked (GlcNAc...) asparagine glycan. The SCP domain maps to 73–213; that stretch reads LDYHNKVRGK…KRATYLVCNY (141 aa).

The protein belongs to the CRISP family.

Its subcellular location is the secreted. In terms of biological role, serine protease inhibitor which displays weak inhibitory activity against trypsin. May play a role in facial patterning during embryonic development. In Danio rerio (Zebrafish), this protein is Peptidase inhibitor 15-A (pi15a).